The following is a 458-amino-acid chain: UDP-N-acetylmuramoylalanine--D-glutamate ligase (458 aa).

124 to 130 is an ATP binding site; the sequence is GSDGKTT.

The protein belongs to the MurCDEF family.

It localises to the cytoplasm. It carries out the reaction UDP-N-acetyl-alpha-D-muramoyl-L-alanine + D-glutamate + ATP = UDP-N-acetyl-alpha-D-muramoyl-L-alanyl-D-glutamate + ADP + phosphate + H(+). It participates in cell wall biogenesis; peptidoglycan biosynthesis. Functionally, cell wall formation. Catalyzes the addition of glutamate to the nucleotide precursor UDP-N-acetylmuramoyl-L-alanine (UMA). This is UDP-N-acetylmuramoylalanine--D-glutamate ligase from Clostridium kluyveri (strain NBRC 12016).